The following is a 218-amino-acid chain: Heart- and neural crest derivatives-expressed protein 1 (218 aa).

Disordered stretches follow at residues 1–23 (MNLV…HPAH), 56–112 (APDF…RTES), and 172–203 (ADGG…RIKG). Positions 8–21 (AHHHHHHHHHHPHP) are enriched in basic residues. The segment covering 68 to 92 (AAAAAASYGPDARPGQSPGRLEALG) has biased composition (low complexity). Basic residues predominate over residues 95-107 (LGRRKGSGPKKER). Residues 97 to 149 (RRKGSGPKKERRRTESINSAFAELRECIPNVPADTKLSKIKTLRLATSYIAYL) form the bHLH domain. The residue at position 110 (Thr-110) is a Phosphothreonine; by PLK4. Ser-112 is modified (phosphoserine; by PLK4).

As to quaternary structure, efficient DNA binding requires dimerization with another bHLH protein. Forms homodimers and heterodimers with TCF3 gene products E12 and E47, HAND2 and HEY1, HEY2 and HEYL (hairy-related transcription factors). Interacts with MDFIC. Interacts with SOX15; the interaction enhances HAND1-induced differentiation of trophoblast giant cells. Post-translationally, phosphorylation by PLK4 disrupts the interaction with MDFIC and leads to translocation into the nucleoplasm, allowing dimerization and transcription factor activity.

It localises to the nucleus. It is found in the nucleoplasm. The protein resides in the nucleolus. In terms of biological role, transcription factor that plays an essential role in both trophoblast giant cell differentiation and in cardiac morphogenesis. Binds the DNA sequence 5'-NRTCTG-3' (non-canonical E-box). Acts as a transcriptional repressor of SOX15. In the adult, could be required for ongoing expression of cardiac-specific genes. The sequence is that of Heart- and neural crest derivatives-expressed protein 1 (HAND1) from Bos taurus (Bovine).